We begin with the raw amino-acid sequence, 208 residues long: Holliday junction resolvase RecU (208 aa).

The interval Met-1–Gly-30 is disordered. Mg(2+) is bound by residues Thr-87, Asp-89, Glu-102, and Gln-121.

It belongs to the RecU family. Mg(2+) is required as a cofactor.

It localises to the cytoplasm. The enzyme catalyses Endonucleolytic cleavage at a junction such as a reciprocal single-stranded crossover between two homologous DNA duplexes (Holliday junction).. In terms of biological role, endonuclease that resolves Holliday junction intermediates in genetic recombination. Cleaves mobile four-strand junctions by introducing symmetrical nicks in paired strands. Promotes annealing of linear ssDNA with homologous dsDNA. Required for DNA repair, homologous recombination and chromosome segregation. The chain is Holliday junction resolvase RecU from Staphylococcus saprophyticus subsp. saprophyticus (strain ATCC 15305 / DSM 20229 / NCIMB 8711 / NCTC 7292 / S-41).